The primary structure comprises 208 residues: MKLLPSVMLKLFLAAVLSALVTGESLERLRRGLAAATSNPDPPTGSTNQLLPTGGDRAQGVQDLEGTDLNLFKVAFSSKPQGLATPSKERNGKKKKKGKGLGKKRDPCLRKYKDYCIHGECRYLQEFRTPSCKCLPGYHGHRCHGLTLPVENPLYTYDHTTVLAVVAVVLSSVCLLVIVGLLMFRYHRRGGYDLESEEKVKLGVASSH.

The first 23 residues, 1 to 23, serve as a signal peptide directing secretion; it reads MKLLPSVMLKLFLAAVLSALVTG. Residues 24–62 constitute a propeptide that is removed on maturation; the sequence is ESLERLRRGLAAATSNPDPPTGSTNQLLPTGGDRAQGVQ. Residues 24–160 are Extracellular-facing; that stretch reads ESLERLRRGL…ENPLYTYDHT (137 aa). Disordered regions lie at residues 35 to 57 and 80 to 104; these read AATS…GGDR and PQGL…LGKK. Over residues 36 to 51 the composition is skewed to polar residues; sequence ATSNPDPPTGSTNQLL. An O-linked (GalNAc...) threonine glycan is attached at Thr85. A compositionally biased stretch (basic residues) spans 91-102; it reads NGKKKKKGKGLG. Positions 104-144 constitute an EGF-like domain; that stretch reads KRDPCLRKYKDYCIHGECRYLQEFRTPSCKCLPGYHGHRCH. Disulfide bonds link Cys108/Cys121, Cys116/Cys132, and Cys134/Cys143. The propeptide at 149 to 208 is C-terminal; it reads PVENPLYTYDHTTVLAVVAVVLSSVCLLVIVGLLMFRYHRRGGYDLESEEKVKLGVASSH. A helical transmembrane segment spans residues 161 to 184; that stretch reads TVLAVVAVVLSSVCLLVIVGLLMF. The Cytoplasmic portion of the chain corresponds to 185-208; it reads RYHRRGGYDLESEEKVKLGVASSH.

In terms of assembly, interacts with FBLN1. Interacts with EGFR and ERBB4. Post-translationally, O-glycosylated. Most abundant in kidney, skeletal muscle, lung, spleen, brain and heart.

The protein resides in the secreted. It is found in the extracellular space. The protein localises to the cell membrane. Its function is as follows. Growth factor that mediates its effects via EGFR, ERBB2 and ERBB4. Required for normal cardiac valve formation and normal heart function. Promotes smooth muscle cell proliferation. May be involved in macrophage-mediated cellular proliferation. It is mitogenic for fibroblasts, but not endothelial cells. It is able to bind EGF receptor/EGFR with higher affinity than EGF itself and is a far more potent mitogen for smooth muscle cells than EGF. Also acts as a diphtheria toxin receptor. This Mus musculus (Mouse) protein is Proheparin-binding EGF-like growth factor (Hbegf).